Reading from the N-terminus, the 404-residue chain is Growth/differentiation factor 6-A (404 aa).

Residues 1–24 (MDALRAVAFYALFVFLWSLPCCQS) form the signal peptide. Positions 25-284 (AALISQKRSK…LQFKARRRRR (260 aa)) are excised as a propeptide. Asn-91 carries N-linked (GlcNAc...) asparagine glycosylation. The tract at residues 263–304 (KSRGDDDEEESALQFKARRRRRTALNNRHGKRHGKKSKSRCS) is disordered. Residues 278–304 (KARRRRRTALNNRHGKRHGKKSKSRCS) show a composition bias toward basic residues. Disulfide bonds link Cys-303–Cys-369, Cys-332–Cys-401, and Cys-336–Cys-403.

This sequence belongs to the TGF-beta family. As to quaternary structure, homodimer; disulfide-linked. As to expression, first expressed in late gastrula stage embryos (9.5 hours post fertilization (hpf)) in anterior neuroectoderm corresponding to the future dorsal part of the brain. Shortly after tailbud formation (11 hpf), expression expands to the entire neural region and is subsequently expressed in derivatives of the lateral neural plate and migrating neural crest cells, with the future midbrain and hindbrain showing strong expression. Also expressed weakly and transiently in the posterior embryo from 11.5 hpf to 15 hpf in the lateral mesoderm, and in ectoderm above the neural keel. At 14 hpf, expressed along the entire length of the embryo and starting around the 16-somite stage, expressed in the dorsal quadrant of the retina, representing the distal tip of the eye anlage. At this stage, also expressed in the hatching gland and the hypochord. At 24 hpf, expressed in the roof plate outlining the fourth brain ventricle, in the posterior hypochord, the primitive gut endoderm, the ventral tail mesenchyme, the dorsal part of the neural tube and the dorsal fin. Weakly expressed in the dorsal part of the posterior spinal cord and in blood cell precursors.

Its subcellular location is the secreted. Growth factor that controls proliferation and cellular differentiation in the retina. Plays a key role in regulating apoptosis during retinal development. Establishes dorsal-ventral positional information in the retina and controls the formation of the retinotectal map. Functions maternally in dorsal/ventral patterning to induce the expression of the zygotic bmp2b and bmp4 genes and ventralize embryos. Zygotic expression does not appear to regulate axis specification, but instead functions to establish the integrity of the axial vessels during embryonic development. May be involved in maintaining the identity of cells of the dorsal-most neural tube and of at least a subset of neural crest cells. The chain is Growth/differentiation factor 6-A (gdf6a) from Danio rerio (Zebrafish).